The primary structure comprises 295 residues: Cytidine deaminase (295 aa).

2 CMP/dCMP-type deaminase domains span residues 48 to 168 and 187 to 295; these read SDKE…FGPA and DDKD…FVNV. Residue 89–91 coordinates substrate; sequence NME. His-102 contacts Zn(2+). Glu-104 functions as the Proton donor in the catalytic mechanism. 2 residues coordinate Zn(2+): Cys-129 and Cys-132.

It belongs to the cytidine and deoxycytidylate deaminase family. Homodimer. It depends on Zn(2+) as a cofactor.

It carries out the reaction cytidine + H2O + H(+) = uridine + NH4(+). The enzyme catalyses 2'-deoxycytidine + H2O + H(+) = 2'-deoxyuridine + NH4(+). Functionally, this enzyme scavenges exogenous and endogenous cytidine and 2'-deoxycytidine for UMP synthesis. The chain is Cytidine deaminase from Vibrio parahaemolyticus serotype O3:K6 (strain RIMD 2210633).